The primary structure comprises 212 residues: Phosphoribosyl-dephospho-CoA transferase (212 aa).

Active-site residues include Asp-139 and Asp-141.

This sequence belongs to the MdcG family.

The catalysed reaction is apo-[malonate decarboxylase ACP] + 2'-(5''-triphospho-alpha-D-ribosyl)-3'-dephospho-CoA = holo-[malonate decarboxylase ACP] + diphosphate. Functionally, transfers 2'-(5-triphosphoribosyl)-3'-dephosphocoenzyme-A to the apo-[acyl-carrier-protein] of the malonate decarboxylase to yield holo-[acyl-carrier-protein]. The chain is Phosphoribosyl-dephospho-CoA transferase from Azotobacter vinelandii (strain DJ / ATCC BAA-1303).